The following is a 244-amino-acid chain: Ureidoacrylate amidohydrolase RutB (244 aa).

Asp-38 serves as the catalytic Proton acceptor. Residue Lys-147 is part of the active site. The active-site Nucleophile is the Cys-180.

Belongs to the isochorismatase family. RutB subfamily.

The catalysed reaction is (Z)-3-ureidoacrylate + H2O + H(+) = (Z)-3-aminoacrylate + NH4(+) + CO2. It catalyses the reaction (Z)-3-ureidoacrylate + H2O = (Z)-3-aminoacrylate + carbamate + H(+). It carries out the reaction (Z)-2-methylureidoacrylate + H2O + H(+) = (Z)-2-methylaminoacrylate + NH4(+) + CO2. Hydrolyzes ureidoacrylate to form aminoacrylate and carbamate. The carbamate hydrolyzes spontaneously, thereby releasing one of the nitrogen atoms of the pyrimidine ring as ammonia and one of its carbon atoms as CO2. This is Ureidoacrylate amidohydrolase RutB from Escherichia coli O1:K1 / APEC.